A 231-amino-acid chain; its full sequence is DNA mismatch repair protein MutH (231 aa).

It belongs to the MutH family.

It localises to the cytoplasm. Sequence-specific endonuclease that cleaves unmethylated GATC sequences. It is involved in DNA mismatch repair. This Klebsiella pneumoniae subsp. pneumoniae (strain ATCC 700721 / MGH 78578) protein is DNA mismatch repair protein MutH.